A 274-amino-acid chain; its full sequence is SPbeta prophage-derived uncharacterized protein YomD (274 aa).

In Bacillus subtilis (strain 168), this protein is SPbeta prophage-derived uncharacterized protein YomD (yomD).